The primary structure comprises 105 residues: uncharacterized protein (105 aa).

Disordered stretches follow at residues 29 to 55 (HTRV…TDES) and 72 to 105 (EQRG…RSGR). Residues 72-81 (EQRGDRRAVR) show a composition bias toward basic and acidic residues.

This is an uncharacterized protein from Streptomyces coelicolor (strain ATCC BAA-471 / A3(2) / M145).